Consider the following 911-residue polypeptide: Translation initiation factor IF-2 (911 aa).

Basic and acidic residues-rich tracts occupy residues leucine 80–leucine 94 and arginine 101–valine 113. Disordered regions lie at residues leucine 80–proline 142, valine 153–glycine 172, and serine 195–lysine 309. The span at lysine 214–threonine 256 shows a compositional bias: basic and acidic residues. Residues alanine 262–lysine 272 are compositionally biased toward basic residues. Residues proline 273–isoleucine 284 are compositionally biased toward basic and acidic residues. Positions serine 286–serine 300 are enriched in low complexity. The 171-residue stretch at isoleucine 408–lysine 578 folds into the tr-type G domain. The interval glycine 417 to threonine 424 is G1. Residue glycine 417 to threonine 424 participates in GTP binding. Residues glycine 442–histidine 446 form a G2 region. The segment at aspartate 464–glycine 467 is G3. Residues aspartate 464–histidine 468 and asparagine 518–aspartate 521 contribute to the GTP site. The segment at asparagine 518–aspartate 521 is G4. The interval serine 554–lysine 556 is G5.

Belongs to the TRAFAC class translation factor GTPase superfamily. Classic translation factor GTPase family. IF-2 subfamily.

It is found in the cytoplasm. Its function is as follows. One of the essential components for the initiation of protein synthesis. Protects formylmethionyl-tRNA from spontaneous hydrolysis and promotes its binding to the 30S ribosomal subunits. Also involved in the hydrolysis of GTP during the formation of the 70S ribosomal complex. This chain is Translation initiation factor IF-2, found in Chlorobium phaeobacteroides (strain BS1).